The chain runs to 461 residues: Phosphoenolpyruvate carboxylase (461 aa).

This sequence belongs to the PEPCase type 2 family. In terms of assembly, homotetramer. The cofactor is Mg(2+).

It catalyses the reaction oxaloacetate + phosphate = phosphoenolpyruvate + hydrogencarbonate. Functionally, catalyzes the irreversible beta-carboxylation of phosphoenolpyruvate (PEP) to form oxaloacetate (OAA), a four-carbon dicarboxylic acid source for the tricarboxylic acid cycle. In Pyrobaculum islandicum (strain DSM 4184 / JCM 9189 / GEO3), this protein is Phosphoenolpyruvate carboxylase.